The following is a 311-amino-acid chain: Mediator of RNA polymerase II transcription subunit 27 (311 aa).

Serine 132 is modified (phosphoserine). Position 134 is an N6-methyllysine (lysine 134).

The protein belongs to the Mediator complex subunit 27 family. Component of the Mediator complex, which is composed of MED1, MED4, MED6, MED7, MED8, MED9, MED10, MED11, MED12, MED13, MED13L, MED14, MED15, MED16, MED17, MED18, MED19, MED20, MED21, MED22, MED23, MED24, MED25, MED26, MED27, MED29, MED30, MED31, CCNC, CDK8 and CDC2L6/CDK11. The MED12, MED13, CCNC and CDK8 subunits form a distinct module termed the CDK8 module. Mediator containing the CDK8 module is less active than Mediator lacking this module in supporting transcriptional activation. Individual preparations of the Mediator complex lacking one or more distinct subunits have been variously termed ARC, CRSP, DRIP, PC2, SMCC and TRAP.

It is found in the nucleus. In terms of biological role, component of the Mediator complex, a coactivator involved in the regulated transcription of nearly all RNA polymerase II-dependent genes. Mediator functions as a bridge to convey information from gene-specific regulatory proteins to the basal RNA polymerase II transcription machinery. Mediator is recruited to promoters by direct interactions with regulatory proteins and serves as a scaffold for the assembly of a functional preinitiation complex with RNA polymerase II and the general transcription factors. This chain is Mediator of RNA polymerase II transcription subunit 27 (Med27), found in Mus musculus (Mouse).